The chain runs to 293 residues: Formamidopyrimidine-DNA glycosylase (293 aa).

P2 serves as the catalytic Schiff-base intermediate with DNA. The active-site Proton donor is E3. K58 acts as the Proton donor; for beta-elimination activity in catalysis. H104, R123, and K166 together coordinate DNA. The FPG-type zinc finger occupies Q257 to R293. The Proton donor; for delta-elimination activity role is filled by R283.

Belongs to the FPG family. Monomer. Zn(2+) is required as a cofactor.

It carries out the reaction Hydrolysis of DNA containing ring-opened 7-methylguanine residues, releasing 2,6-diamino-4-hydroxy-5-(N-methyl)formamidopyrimidine.. The catalysed reaction is 2'-deoxyribonucleotide-(2'-deoxyribose 5'-phosphate)-2'-deoxyribonucleotide-DNA = a 3'-end 2'-deoxyribonucleotide-(2,3-dehydro-2,3-deoxyribose 5'-phosphate)-DNA + a 5'-end 5'-phospho-2'-deoxyribonucleoside-DNA + H(+). Its function is as follows. Involved in base excision repair of DNA damaged by oxidation or by mutagenic agents. Acts as a DNA glycosylase that recognizes and removes damaged bases. Has a preference for oxidized purines, such as 7,8-dihydro-8-oxoguanine (8-oxoG). Has AP (apurinic/apyrimidinic) lyase activity and introduces nicks in the DNA strand. Cleaves the DNA backbone by beta-delta elimination to generate a single-strand break at the site of the removed base with both 3'- and 5'-phosphates. The protein is Formamidopyrimidine-DNA glycosylase of Bradyrhizobium sp. (strain ORS 278).